Consider the following 147-residue polypeptide: Cytochrome c-type biogenesis protein CcmE (147 aa).

Over 1-9 (MKSLKKKRR) the chain is Cytoplasmic. A helical; Signal-anchor for type II membrane protein membrane pass occupies residues 10–30 (IQILVAAAVALVLAVGLIGYG). At 31-147 (FRDGINLYRS…EQGVYQEPNS (117 aa)) the chain is on the periplasmic side. The heme site is built by H123 and Y127.

This sequence belongs to the CcmE/CycJ family.

It localises to the cell inner membrane. Functionally, heme chaperone required for the biogenesis of c-type cytochromes. Transiently binds heme delivered by CcmC and transfers the heme to apo-cytochromes in a process facilitated by CcmF and CcmH. The chain is Cytochrome c-type biogenesis protein CcmE from Paracoccus denitrificans (strain Pd 1222).